We begin with the raw amino-acid sequence, 844 residues long: Translation elongation factor 2 (844 aa).

Positions 17–348 constitute a tr-type G domain; that stretch reads RNIRNMSVIA…MIAIHLPSPV (332 aa). 26 to 33 contacts GTP; it reads AHVDHGKS. Residues Thr-57 and Thr-59 each carry the phosphothreonine modification. GTP is bound by residues 162-165 and 219-221; these read NKMD and SGL. The residue at position 488 (Ser-488) is a Phosphoserine. His-701 is modified (diphthamide).

The protein belongs to the TRAFAC class translation factor GTPase superfamily. Classic translation factor GTPase family. EF-G/EF-2 subfamily. Phosphorylation by EF-2 kinase completely inactivates EF-2.

The protein localises to the cytoplasm. The enzyme catalyses GTP + H2O = GDP + phosphate + H(+). Catalyzes the GTP-dependent ribosomal translocation step during translation elongation. During this step, the ribosome changes from the pre-translocational (PRE) to the post-translocational (POST) state as the newly formed A-site-bound peptidyl-tRNA and P-site-bound deacylated tRNA move to the P and E sites, respectively. Catalyzes the coordinated movement of the two tRNA molecules, the mRNA and conformational changes in the ribosome. The sequence is that of Translation elongation factor 2 from Bombyx mori (Silk moth).